Here is a 360-residue protein sequence, read N- to C-terminus: Histidinol-phosphate aminotransferase (360 aa).

K223 is modified (N6-(pyridoxal phosphate)lysine).

Belongs to the class-II pyridoxal-phosphate-dependent aminotransferase family. Histidinol-phosphate aminotransferase subfamily. In terms of assembly, homodimer. Requires pyridoxal 5'-phosphate as cofactor.

The catalysed reaction is L-histidinol phosphate + 2-oxoglutarate = 3-(imidazol-4-yl)-2-oxopropyl phosphate + L-glutamate. Its pathway is amino-acid biosynthesis; L-histidine biosynthesis; L-histidine from 5-phospho-alpha-D-ribose 1-diphosphate: step 7/9. The sequence is that of Histidinol-phosphate aminotransferase from Bacillus subtilis subsp. natto.